The primary structure comprises 571 residues: Urease subunit alpha (571 aa).

A Urease domain is found at 132–571; sequence GGIDSHIHFI…LPMAQRYFLF (440 aa). The Ni(2+) site is built by H137, H139, and K220. An N6-carboxylysine modification is found at K220. Residue H222 coordinates substrate. Residues H249 and H275 each coordinate Ni(2+). H323 (proton donor) is an active-site residue. Residue D363 participates in Ni(2+) binding.

The protein belongs to the metallo-dependent hydrolases superfamily. Urease alpha subunit family. Heterotrimer of UreA (gamma), UreB (beta) and UreC (alpha) subunits. Three heterotrimers associate to form the active enzyme. It depends on Ni cation as a cofactor. In terms of processing, carboxylation allows a single lysine to coordinate two nickel ions.

The protein localises to the cytoplasm. It carries out the reaction urea + 2 H2O + H(+) = hydrogencarbonate + 2 NH4(+). It functions in the pathway nitrogen metabolism; urea degradation; CO(2) and NH(3) from urea (urease route): step 1/1. In Kocuria rhizophila (strain ATCC 9341 / DSM 348 / NBRC 103217 / DC2201), this protein is Urease subunit alpha.